A 1470-amino-acid chain; its full sequence is Transient receptor potential cation channel subfamily M member 2 (1470 aa).

Over 1–725 the chain is Cytoplasmic; the sequence is MDEAALEPTL…GELSVDNPHW (725 aa). ADP-D-ribose is bound by residues tyrosine 267, arginine 274, 305-308, and arginine 330; that span reads GPGT. Residues 726 to 738 lie within the membrane without spanning it; the sequence is KVLLCMIFFPLIY. Topologically, residues 739 to 808 are cytoplasmic; sequence TGFLTFRRDE…MSFLKSPQVK (70 aa). The helical transmembrane segment at 809–829 threads the bilayer; sequence FYWNIASYFGFLWLFAVVLMI. The Extracellular portion of the chain corresponds to 830 to 836; sequence DFQTSPS. Residues 837–857 traverse the membrane as a helical segment; it reads WRELLLYVWLTSLVCEEIRQL. Ca(2+) is bound by residues glutamate 853 and glutamine 856. Residues 858–876 are Cytoplasmic-facing; the sequence is YHDFDGSGFRRKAKMYIKD. The chain crosses the membrane as a helical span at residues 877–897; that stretch reads LWNILDVLSIVLFIAGLICRL. Residue asparagine 879 participates in Ca(2+) binding. At 898 to 905 the chain is on the extracellular side; sequence QASDTVFY. The chain crosses the membrane as a helical span at residues 906 to 926; that stretch reads IGKVILCIDFIIFCLRLMAIF. Over 927–941 the chain is Cytoplasmic; it reads SISRTLGPKIIIVRR. The chain crosses the membrane as a helical span at residues 942-968; the sequence is MMLDLFFFMFLLSIWVVAYGVAKQGIL. The Extracellular segment spans residues 969 to 977; sequence IENEERLNW. Positions 978–1002 form an intramembrane region, pore-forming; sequence IIRGAVYEPYITIFGNFPTNIDNTL. The Selectivity filter motif lies at 991 to 993; the sequence is FGN. Residues 1003 to 1034 are Extracellular-facing; the sequence is FDISSCSVNASDPLKPKCPMLNADNTPVFPEW. A disulfide bridge connects residues cysteine 1008 and cysteine 1020. N-linked (GlcNAc...) asparagine glycosylation occurs at asparagine 1011. The chain crosses the membrane as a helical span at residues 1035 to 1059; that stretch reads LTIMMLCVYLLFANILLLNLLIAIF. The Cytoplasmic portion of the chain corresponds to 1060-1087; it reads NYTFQEVQDNTDTIWKFQRYELIKEYHS. Ca(2+) is bound at residue glutamate 1084. The stretch at 1088-1105 is an intramembrane region; it reads RPALPPPFILLSHLILFI. At 1106–1470 the chain is on the cytoplasmic side; the sequence is RGVFLRDLPQ…QIAHHHNTYF (365 aa). The divergent Nudix hydrolase-like domain stretch occupies residues 1157–1470; sequence HRIHDTAEKV…QIAHHHNTYF (314 aa). Disordered stretches follow at residues 1215-1256 and 1281-1314; these read KSKV…LQYP and PPVY…GKGA. Over residues 1231 to 1244 the composition is skewed to acidic residues; it reads DDGDSSGQETDDEE. Positions 1283–1295 are enriched in polar residues; that stretch reads VYNQQDSSESDTS. 2 residues coordinate ADP-D-ribose: aspartate 1398 and arginine 1400.

This sequence belongs to the transient receptor (TC 1.A.4) family. LTrpC subfamily. TRPM2 sub-subfamily. As to quaternary structure, homotetramer.

The protein resides in the cell membrane. The enzyme catalyses Ca(2+)(in) = Ca(2+)(out). It catalyses the reaction Na(+)(in) = Na(+)(out). Its activity is regulated as follows. Activated by intracellular ADP-ribose. Ca(2+) and PI(4,5)P2 are required for channel opening by ADP-ribose. Its function is as follows. Nonselective, voltage-independent cation channel that mediates Ca(2+) influx, leading to increased cytoplasmic Ca(2+) levels. Functions as a ligand-gated ion channel, gated by intracellular adenosine diphosphate ribose (ADP-ribose), Ca(2+), warm temperature, and oxidative stress. Binding of ADP-ribose to the cytoplasmic N-terminal region causes a conformation change; the channel is primed but still requires Ca(2+) binding to trigger channel opening. The chain is Transient receptor potential cation channel subfamily M member 2 from Danio rerio (Zebrafish).